The primary structure comprises 658 residues: Ubiquilin-3 (658 aa).

A Ubiquitin-like domain is found at 22–96 (IRVTVKTPKD…VHLVIKMQRR (75 aa)). Residues 194 to 233 (NPHMQHLIQQNPEIGHILNNPEIMRQTMEFLRNPSMMQEM) form the STI1 domain. Residues 280 to 291 (TATTASTTTTSS) are compositionally biased toward low complexity. Disordered stretches follow at residues 280-336 (TATT…RNRL) and 362-478 (YLQG…PESP). The segment covering 312-323 (VSGGRQGRGGRQ) has biased composition (gly residues). 3 stretches are compositionally biased toward polar residues: residues 362 to 379 (YLQG…SPLS), 389 to 400 (SSPKSGSGQSLP), and 438 to 469 (TGPS…SLMS). The 45-residue stretch at 614–658 (QLEAHFRVQLEQLRAMGFLNLEANLQALIATEGDVDAAVEKLRKS) folds into the UBA domain.

Testis-specific (at protein level).

The sequence is that of Ubiquilin-3 (Ubqln3) from Mus musculus (Mouse).